Consider the following 605-residue polypeptide: Isocitrate dehydrogenase kinase/phosphatase (605 aa).

ATP is bound by residues 327–333 and Lys-348; that span reads APGIKGL. Asp-383 is an active-site residue.

This sequence belongs to the AceK family.

It is found in the cytoplasm. The enzyme catalyses L-seryl-[isocitrate dehydrogenase] + ATP = O-phospho-L-seryl-[isocitrate dehydrogenase] + ADP + H(+). In terms of biological role, bifunctional enzyme which can phosphorylate or dephosphorylate isocitrate dehydrogenase (IDH) on a specific serine residue. This is a regulatory mechanism which enables bacteria to bypass the Krebs cycle via the glyoxylate shunt in response to the source of carbon. When bacteria are grown on glucose, IDH is fully active and unphosphorylated, but when grown on acetate or ethanol, the activity of IDH declines drastically concomitant with its phosphorylation. The chain is Isocitrate dehydrogenase kinase/phosphatase from Burkholderia orbicola (strain AU 1054).